Reading from the N-terminus, the 402-residue chain is S-adenosylmethionine synthase (402 aa).

An ATP-binding site is contributed by H17. Residue D19 coordinates Mg(2+). E45 is a binding site for K(+). L-methionine-binding residues include E58 and Q101. Positions 101-111 (QSSDIADGVNE) are flexible loop. Residues 177-179 (DAK), 244-245 (RF), D253, 259-260 (RK), A276, and K280 each bind ATP. Position 253 (D253) interacts with L-methionine. Residue K284 coordinates L-methionine.

The protein belongs to the AdoMet synthase family. Homotetramer; dimer of dimers. Mg(2+) is required as a cofactor. The cofactor is K(+).

Its subcellular location is the cytoplasm. It catalyses the reaction L-methionine + ATP + H2O = S-adenosyl-L-methionine + phosphate + diphosphate. It functions in the pathway amino-acid biosynthesis; S-adenosyl-L-methionine biosynthesis; S-adenosyl-L-methionine from L-methionine: step 1/1. Catalyzes the formation of S-adenosylmethionine (AdoMet) from methionine and ATP. The overall synthetic reaction is composed of two sequential steps, AdoMet formation and the subsequent tripolyphosphate hydrolysis which occurs prior to release of AdoMet from the enzyme. In Lactobacillus johnsonii (strain CNCM I-12250 / La1 / NCC 533), this protein is S-adenosylmethionine synthase.